Consider the following 170-residue polypeptide: Urease accessory protein UreE (170 aa).

It belongs to the UreE family.

It is found in the cytoplasm. Involved in urease metallocenter assembly. Binds nickel. Probably functions as a nickel donor during metallocenter assembly. In Helicobacter pylori (strain J99 / ATCC 700824) (Campylobacter pylori J99), this protein is Urease accessory protein UreE.